The primary structure comprises 443 residues: MLPCASCLPGSLLLWALLLLLLGSASPQDSEEPDSYTECTDGYEWDPDSQHCRDVNECLTIPEACKGEMKCINHYGGYLCLPRSAAVINDLHGEGPPPPVPPAQHPNPCPPGYEPDDQDSCVDVDECAQALHDCRPSQDCHNLPGSYQCTCPDGYRKIGPECVDIDECRYRYCQHRCVNLPGSFRCQCEPGFQLGPNNRSCVDVNECDMGAPCEQRCFNSYGTFLCRCHQGYELHRDGFSCSDIDECSYSSYLCQYRCINEPGRFSCHCPQGYQLLATRLCQDIDECESGAHQCSEAQTCVNFHGGYRCVDTNRCVEPYIQVSENRCLCPASNPLCREQPSSIVHRYMTITSERSVPADVFQIQATSVYPGAYNAFQIRAGNSQGDFYIRQINNVSAMLVLARPVTGPREYVLDLEMVTMNSLMSYRASSVLRLTVFVGAYTF.

The signal sequence occupies residues methionine 1–glycine 23. One can recognise an EGF-like 1; atypical domain in the interval tyrosine 36–leucine 81. Cystine bridges form between cysteine 58/cysteine 121, cysteine 65/cysteine 80, cysteine 71/cysteine 109, cysteine 127/cysteine 140, cysteine 134/cysteine 149, cysteine 151/cysteine 162, cysteine 168/cysteine 177, cysteine 173/cysteine 186, cysteine 188/cysteine 201, cysteine 207/cysteine 217, cysteine 213/cysteine 226, cysteine 228/cysteine 241, cysteine 247/cysteine 258, cysteine 254/cysteine 267, cysteine 269/cysteine 281, cysteine 287/cysteine 300, cysteine 294/cysteine 309, and cysteine 315/cysteine 327. An EGF-like 2; calcium-binding domain is found at aspartate 123–valine 163. The 39-residue stretch at aspartate 164–valine 202 folds into the EGF-like 3; calcium-binding domain. Asparagine 198 carries N-linked (GlcNAc...) asparagine glycosylation. Positions aspartate 203–serine 242 constitute an EGF-like 4; calcium-binding domain. The 40-residue stretch at aspartate 243–glutamine 282 folds into the EGF-like 5; calcium-binding domain. The 46-residue stretch at aspartate 283–leucine 328 folds into the EGF-like 6; calcium-binding domain. Residue asparagine 394 is glycosylated (N-linked (GlcNAc...) asparagine).

It belongs to the fibulin family. In terms of assembly, homodimer; disulfide-linked. Multimer; allows heparin binding. Monomer. Interacts with FBN1 (via N-terminal domain); this interaction inhibits EFEMP2 binding to LOX and ELN. Interacts with LOX (via propeptide); this interaction is strong and facilitates formation of ternary complexes with ELN during elastic fiber assembly; this interaction limits interaction of EFEMP2 with FBLN5. Interacts with PITX2. Interacts with ELN with moderate affinity; this interaction regulates ELN self-assembly maturation stage. Interacts with FBLN5 with moderate affinity. Interacts with LOXL1 (via propeptide), LTBP1 and TGFB1 stronger than with LOXL2 and LTBP3. Interacts with PCOLCE. Interacts with collagen type IV trimer (COL4A1-COL4A1-COL4A2), NID2 and moderately with COL15A1-derived endostatin. Interacts with EMILIN1; this interaction promotes the incorporation of EFEMP2 into the extracellular matrix. Interacts with LTBP4; the LTBP4 long form (LTBP4L) has a stronger binding affinity than the LTBP4 short form and the LTBP4 long form promotes fibrillar deposition of EFEMP2. Post-translationally, N-glycosylated; contains mostly complex-type glycans. Not O-glycosylated. In terms of processing, cleaved by ELANE; produces a 50-55 kDa fragment. Cleaved by MMP2 and MMP9; produces several fragments.

It is found in the secreted. Its subcellular location is the extracellular space. The protein resides in the extracellular matrix. The protein localises to the basement membrane. Plays a crucial role in elastic fiber formation in tissue, and in the formation of ultrastructural connections between elastic laminae and smooth muscle cells in the aorta, therefore participates in terminal differentiation and maturation of smooth muscle cell (SMC) and in the mechanical properties and wall integrity maintenance of the aorta. In addition, is involved in the control of collagen fibril assembly in tissue throught proteolytic activation of LOX leading to cross- linking of collagen and elastin. Also promotes ELN coacervation and participates in the deposition of ELN coacervates on to microfibrils but also regulates ELN cross- linking through LOX interaction. Moreover adheres to the cells through heparin binding in a calcium-dependent manner and regulates vascularlar smooth muscle cells proliferation through angiotensin signaling. The polypeptide is EGF-containing fibulin-like extracellular matrix protein 2 (Homo sapiens (Human)).